The sequence spans 81 residues: Delta-conotoxin PVIA (81 aa).

A signal peptide spans 1 to 22 (MKLTCVMIVAVLFLTAWTFVTA). A propeptide spanning residues 23-49 (DDSKNGLENHFWKARDEMKNREASKLD) is cleaved from the precursor. 3 disulfides stabilise this stretch: Cys54-Cys69, Cys61-Cys73, and Cys68-Cys78. 4-hydroxyproline occurs at positions 57 and 65. At Gly80 the chain carries Glycine amide; in form delta-conotoxin PVIA.

Post-translationally, the difference between delta-conotoxin PVIA and [deamido]-delta-conotoxin PVIA lies in the state of amidation of Gly-80. Expressed by the venom duct.

The protein localises to the secreted. Its function is as follows. Delta-conotoxins bind to site 6 of voltage-gated sodium channels (Nav) and inhibit the inactivation process. This toxin shows weak effects on rNav1.2/SCN2A (EC(50)=2.9 uM), rNav1.4/SCN4A (EC(50)=5.2 uM), hNav1.7/SCN9A (EC(50)=1.9 uM) and rNav1.7/SCN9A (EC(50)=6.4 uM). In vivo, this toxin shows different effects. In mice, injection of this toxin causes hyperactivity, rapid running, limb extension, and death. In fish, the peptide elicites spurts of rapid swimming, with twisted motions, quivering fins and the lockjaw extended mouth syndrome. Rigid paralysis and death are observed at higher doses. In mollusks, this peptide is inactive. Injection of this peptide together with the kappa-conotoxin PVIIA causes the sudden tetanus of prey (STOP) syndrome, which is a single, lethal 'fin-pop' in envenomed fish. The chain is Delta-conotoxin PVIA from Conus purpurascens (Purple cone).